The chain runs to 347 residues: Heat-inducible transcription repressor HrcA (347 aa).

Belongs to the HrcA family.

Its function is as follows. Negative regulator of class I heat shock genes (grpE-dnaK-dnaJ and groELS operons). Prevents heat-shock induction of these operons. The polypeptide is Heat-inducible transcription repressor HrcA (Rhodococcus erythropolis (strain PR4 / NBRC 100887)).